Here is a 308-residue protein sequence, read N- to C-terminus: Ribonuclease Z (308 aa).

Zn(2+) contacts are provided by H62, H64, D66, H67, H140, D211, and H269. The Proton acceptor role is filled by D66.

Belongs to the RNase Z family. Homodimer. It depends on Zn(2+) as a cofactor.

It carries out the reaction Endonucleolytic cleavage of RNA, removing extra 3' nucleotides from tRNA precursor, generating 3' termini of tRNAs. A 3'-hydroxy group is left at the tRNA terminus and a 5'-phosphoryl group is left at the trailer molecule.. Zinc phosphodiesterase, which displays some tRNA 3'-processing endonuclease activity. Probably involved in tRNA maturation, by removing a 3'-trailer from precursor tRNA. The protein is Ribonuclease Z of Treponema denticola (strain ATCC 35405 / DSM 14222 / CIP 103919 / JCM 8153 / KCTC 15104).